We begin with the raw amino-acid sequence, 410 residues long: Peptidase T (410 aa).

His-79 serves as a coordination point for Zn(2+). The active site involves Asp-81. A Zn(2+)-binding site is contributed by Asp-142. The Proton acceptor role is filled by Glu-176. Zn(2+) is bound by residues Glu-177, Asp-199, and His-381.

The protein belongs to the peptidase M20B family. Requires Zn(2+) as cofactor.

Its subcellular location is the cytoplasm. The enzyme catalyses Release of the N-terminal residue from a tripeptide.. Its function is as follows. Cleaves the N-terminal amino acid of tripeptides. In Bacillus anthracis (strain A0248), this protein is Peptidase T.